Here is a 432-residue protein sequence, read N- to C-terminus: Tol-Pal system protein TolB (432 aa).

The signal sequence occupies residues 1 to 21; the sequence is MKHVRIFATLLALLVISVTPA.

This sequence belongs to the TolB family. In terms of assembly, the Tol-Pal system is composed of five core proteins: the inner membrane proteins TolA, TolQ and TolR, the periplasmic protein TolB and the outer membrane protein Pal. They form a network linking the inner and outer membranes and the peptidoglycan layer.

Its subcellular location is the periplasm. Functionally, part of the Tol-Pal system, which plays a role in outer membrane invagination during cell division and is important for maintaining outer membrane integrity. The protein is Tol-Pal system protein TolB of Geobacter sulfurreducens (strain ATCC 51573 / DSM 12127 / PCA).